The primary structure comprises 307 residues: Oxygen-dependent coproporphyrinogen-III oxidase (307 aa).

Residue Ser99 participates in substrate binding. A divalent metal cation-binding residues include His103 and His113. The active-site Proton donor is the His113. Asn115–Arg117 is a substrate binding site. Residues His152 and His182 each contribute to the a divalent metal cation site. The segment at Tyr247–Arg282 is important for dimerization. Substrate is bound at residue Gly265–Arg267.

The protein belongs to the aerobic coproporphyrinogen-III oxidase family. In terms of assembly, homodimer. It depends on a divalent metal cation as a cofactor.

It localises to the cytoplasm. It carries out the reaction coproporphyrinogen III + O2 + 2 H(+) = protoporphyrinogen IX + 2 CO2 + 2 H2O. The protein operates within porphyrin-containing compound metabolism; protoporphyrin-IX biosynthesis; protoporphyrinogen-IX from coproporphyrinogen-III (O2 route): step 1/1. In terms of biological role, involved in the heme biosynthesis. Catalyzes the aerobic oxidative decarboxylation of propionate groups of rings A and B of coproporphyrinogen-III to yield the vinyl groups in protoporphyrinogen-IX. This chain is Oxygen-dependent coproporphyrinogen-III oxidase, found in Burkholderia lata (strain ATCC 17760 / DSM 23089 / LMG 22485 / NCIMB 9086 / R18194 / 383).